Here is a 581-residue protein sequence, read N- to C-terminus: Peptidyl-prolyl cis-trans isomerase FKBP10 (581 aa).

An N-terminal signal peptide occupies residues 1 to 33 (MFLVGSSSHTLHRLRILPLLLLLQTLERGLGRA). PPIase FKBP-type domains are found at residues 61 to 149 (GDFV…LDVW), 173 to 261 (SDFV…LDVH), and 285 to 373 (GDFM…IDFH). Asn69, Asn181, Asn293, Asn309, Asn351, Asn392, and Asn406 each carry an N-linked (GlcNAc...) asparagine glycan. In terms of domain architecture, PPIase FKBP-type 4 spans 398–485 (GDFIRYHYNC…LFEVELVSRE (88 aa)). EF-hand domains are found at residues 496–531 (WYQD…QVNE) and 541–576 (DPDK…DQER). 10 residues coordinate Ca(2+): Asp509, Asn511, Asp513, Glu515, Glu520, Asp554, Asn556, Asp558, Lys560, and Glu565. A disordered region spans residues 533 to 581 (KGRLMPGQDPDKTISDMFQNQDRNQDGKITAEELKLKSDEDQERVHEEL). Basic and acidic residues predominate over residues 555-581 (RNQDGKITAEELKLKSDEDQERVHEEL). Positions 578–581 (HEEL) match the Prevents secretion from ER motif.

N-glycosylated. Post-translationally, phosphorylated. As to expression, expressed in aorta, brain, heart, kidney, lung, spleen and testis. Not detected in liver.

It localises to the endoplasmic reticulum lumen. The catalysed reaction is [protein]-peptidylproline (omega=180) = [protein]-peptidylproline (omega=0). With respect to regulation, inhibited by both FK506 and rapamycin, but not by cyclosporin A. In terms of biological role, PPIases accelerate the folding of proteins during protein synthesis. This Mus musculus (Mouse) protein is Peptidyl-prolyl cis-trans isomerase FKBP10 (Fkbp10).